The following is a 378-amino-acid chain: Leukocyte elastase inhibitor (378 aa).

N-acetylmethionine is present on M1. An N6-acetyllysine modification is found at K137. Position 299 is a phosphoserine (S299). The tract at residues 350–378 (DFIADHPFIFFIRHNPSSNILFLGRLSSP) is CARD-binding motif (CBM).

This sequence belongs to the serpin family. Ov-serpin subfamily. In terms of assembly, monomer. Interacts (via C-terminus) with CASP1; CASP4 (via CARD domain) and CASP5; these interactions regulate the activity of inflammatory caspases. Interacts with PRTN3. Interacts with GZMH.

It is found in the secreted. The protein localises to the cytoplasm. The protein resides in the cytolytic granule. It localises to the early endosome. Its function is as follows. Neutrophil serine protease inhibitor that plays an essential role in the regulation of the innate immune response, inflammation and cellular homeostasis. Acts primarily to protect the cell from proteases released in the cytoplasm during stress or infection. These proteases are important in killing microbes but when released from granules, these potent enzymes also destroy host proteins and contribute to mortality. Regulates the activity of the neutrophil proteases elastase, cathepsin G, proteinase-3, chymase, chymotrypsin, and kallikrein-3. Also acts as a potent intracellular inhibitor of GZMH by directly blocking its proteolytic activity. During inflammation, limits the activity of inflammatory caspases CASP1, CASP4 and CASP5 by suppressing their caspase-recruitment domain (CARD) oligomerization and enzymatic activation. When secreted, promotes the proliferation of beta-cells via its protease inhibitory function. Functionally, may be cleaved leading to a loss of its anti-protease activity and to the appearance of an endonuclease activity. However no catalytic site was identified. The protein is Leukocyte elastase inhibitor (SERPINB1) of Sus scrofa (Pig).